A 449-amino-acid polypeptide reads, in one-letter code: F-box/LRR-repeat protein At3g60040 (449 aa).

The F-box domain maps to 12-64; the sequence is RDAISWLPDEVLGKILSLIPTKQAVSTSLLAKKWRTIFRLVDHLELDDSFSLQ. 6 LRR repeats span residues 161-188, 191-215, 216-237, 239-263, 287-312, and 340-365; these read LTLG…FIDT, FYDI…SVHH, HDFI…SVDY, CPDD…EYSH, ERKV…HLSP, and KNKR…IVKD.

The protein is F-box/LRR-repeat protein At3g60040 of Arabidopsis thaliana (Mouse-ear cress).